The primary structure comprises 316 residues: UDP-N-acetylenolpyruvoylglucosamine reductase (316 aa).

Positions 27–225 (VGGKAERFYR…KTAINALLKK (199 aa)) constitute an FAD-binding PCMH-type domain. The active site involves Arg190. Catalysis depends on Ser239, which acts as the Proton donor. Residue Glu309 is part of the active site.

It belongs to the MurB family. FAD serves as cofactor.

It localises to the cytoplasm. The catalysed reaction is UDP-N-acetyl-alpha-D-muramate + NADP(+) = UDP-N-acetyl-3-O-(1-carboxyvinyl)-alpha-D-glucosamine + NADPH + H(+). Its pathway is cell wall biogenesis; peptidoglycan biosynthesis. Functionally, cell wall formation. This Coxiella burnetii (strain CbuG_Q212) (Coxiella burnetii (strain Q212)) protein is UDP-N-acetylenolpyruvoylglucosamine reductase.